A 500-amino-acid polypeptide reads, in one-letter code: L-arabinose isomerase (500 aa).

Residues Glu-306, Glu-333, His-350, and His-450 each coordinate Mn(2+).

It belongs to the arabinose isomerase family. Homohexamer. The cofactor is Mn(2+).

The enzyme catalyses beta-L-arabinopyranose = L-ribulose. It functions in the pathway carbohydrate degradation; L-arabinose degradation via L-ribulose; D-xylulose 5-phosphate from L-arabinose (bacterial route): step 1/3. Its function is as follows. Catalyzes the conversion of L-arabinose to L-ribulose. In Enterobacter sp. (strain 638), this protein is L-arabinose isomerase.